The primary structure comprises 426 residues: Enolase (426 aa).

Gln165 lines the (2R)-2-phosphoglycerate pocket. The active-site Proton donor is the Glu207. 3 residues coordinate Mg(2+): Asp244, Glu285, and Asp312. Residues Lys337, Arg366, Ser367, and Lys388 each coordinate (2R)-2-phosphoglycerate. The active-site Proton acceptor is Lys337.

The protein belongs to the enolase family. The cofactor is Mg(2+).

It is found in the cytoplasm. The protein localises to the secreted. It localises to the cell surface. The catalysed reaction is (2R)-2-phosphoglycerate = phosphoenolpyruvate + H2O. It functions in the pathway carbohydrate degradation; glycolysis; pyruvate from D-glyceraldehyde 3-phosphate: step 4/5. Functionally, catalyzes the reversible conversion of 2-phosphoglycerate (2-PG) into phosphoenolpyruvate (PEP). It is essential for the degradation of carbohydrates via glycolysis. The sequence is that of Enolase from Thermosynechococcus vestitus (strain NIES-2133 / IAM M-273 / BP-1).